Consider the following 109-residue polypeptide: MSGKYFEATDQNFQAEILNSDKVALVDFWAAWCGPCMMLGPVIEELAGDYEGKAIIAKLNVDENPNTAGQYGIRSIPTMLIIKGGKVVDQMVGALPKNMIAKKLDEHIG.

The region spanning serine 2–glycine 109 is the Thioredoxin domain. A disulfide bridge links cysteine 33 with cysteine 36.

The protein belongs to the thioredoxin family.

In terms of biological role, participates in various redox reactions through the reversible oxidation of its active center dithiol to a disulfide and catalyzes dithiol-disulfide exchange reactions. This Chlorobaculum tepidum (strain ATCC 49652 / DSM 12025 / NBRC 103806 / TLS) (Chlorobium tepidum) protein is Thioredoxin 2 (trx2).